A 218-amino-acid chain; its full sequence is Pyrrolidone-carboxylate peptidase (218 aa).

Active-site residues include glutamate 81, cysteine 144, and histidine 169.

This sequence belongs to the peptidase C15 family. In terms of assembly, homotetramer.

It localises to the cytoplasm. It catalyses the reaction Release of an N-terminal pyroglutamyl group from a polypeptide, the second amino acid generally not being Pro.. Its function is as follows. Removes 5-oxoproline from various penultimate amino acid residues except L-proline. The polypeptide is Pyrrolidone-carboxylate peptidase (pcp) (Deinococcus radiodurans (strain ATCC 13939 / DSM 20539 / JCM 16871 / CCUG 27074 / LMG 4051 / NBRC 15346 / NCIMB 9279 / VKM B-1422 / R1)).